Reading from the N-terminus, the 494-residue chain is Sugar phosphate exchanger 3 (494 aa).

Residues 16–36 (FSHHHVVVFLLTFFSYSLLHA) traverse the membrane as a helical segment. Residue asparagine 58 is glycosylated (N-linked (GlcNAc...) asparagine). Transmembrane regions (helical) follow at residues 81 to 101 (TLFL…GLFI), 113 to 133 (WVLS…GALT), 147 to 167 (LWIV…AVMG), 177 to 197 (VVFG…ACLA), and 209 to 229 (FLVT…GLLV). An N-linked (GlcNAc...) asparagine glycan is attached at asparagine 266. 6 helical membrane passes run 297-317 (LAYA…PFYL), 333-353 (IWYD…SDVL), 357-377 (APVL…YSRS), 386-406 (LLMT…SSAI), 428-448 (GIVD…VSLI), and 452-472 (LGWM…IVFI).

Belongs to the major facilitator superfamily. Organophosphate:Pi antiporter (OPA) (TC 2.A.1.4) family. As to quaternary structure, interacts with ATRAID; the interaction is direct and both proteins are mutually dependent for their stability. Post-translationally, glycosylated. In terms of tissue distribution, expressed in liver, kidney, intestine and pancreas.

The protein resides in the endoplasmic reticulum membrane. It localises to the lysosome membrane. In terms of biological role, unlike the other SLC37 members, lacks glucose-6-phosphate antiporter activity. In osteoclasts, forms a transporter complex with ATRAID for nitrogen-containing-bisphophonates (N-BPs) required for releasing N-BP molecules that have trafficked to lysosomes through fluid-phase endocytosis into the cytosol. This chain is Sugar phosphate exchanger 3, found in Homo sapiens (Human).